Here is a 245-residue protein sequence, read N- to C-terminus: Terpene cyclase esdpB (245 aa).

A run of 7 helical transmembrane segments spans residues 19-39 (MVASIFLISGTGWIVNYVTTI), 48-68 (SGVTLLSLCNNLAWETVFAVI), 75-95 (IAALVITVWLLVNIYVIYVSV), 112-132 (LPVVTLLGFVGFLTGHIALSM), 140-160 (LYWGGMICQVTLSASALGLLI), 177-197 (FIASSFGVPGLFVRAVYWPSA), and 208-228 (WLSGVFFLLDLSYGAIYYHIS).

The protein belongs to the paxB family.

The protein resides in the membrane. Its pathway is secondary metabolite biosynthesis; terpenoid biosynthesis. In terms of biological role, terpene cyclase; part of the cluster that mediates the biosynthesis of shearones, diterpenoid pyrones (DPs) which are structurally diverse meroterpenoids consisting of a diterpene linked by a pyrone, and which may exhibit a range of bioactivities. Within the pathway, esdpB takes part to the biosynthesis of the molecular scaffold by catalyzing the cyclization of the prenyl group initiated by protonation and ring-opening of the epoxide to produce the diterpenoid pyrone scaffold. The molecular scaffold is commonly biosynthesized by a series of enzymes including the non-reducing polyketide synthase (NR-PKS) esdpA that generates an alpha-pyrone; the prenyltransferase esdpC that attaches a geranylgeranyl pyrophosphate (GGPP) produced by the GGPP synthase (GGPPS) esdpD onto the pyrone unit; the FAD-dependent monooxygenase esdpE that converts an olefin on the diterpene unit into an epoxide; and the terpene cyclase esdpB that catalyzes the cyclization reactions to give the molecular backbone shearone A. In the modification steps, esdpF oxidizes the hydroxy group to a ketone at C-3 and esdpG then attaches hydroxy groups at both C-11 and C-12. After that, esdpI hydroxylates at C-20 and esdpH hydroxylates at C-6'. The ether bridge is generated by nucleophilic attack of the hydroxy group at C-20 to the carbonyl carbon at C-3. EsdpH can also functions prior to esdpI. The different combinations of these modification enzymes lead to the production of diverse shearone derivatives, shearone I being the end product of the pathway. The alpha-ketoglutarate-dependent dioxygenase esdpJ seems not to be involved in this pathway. This chain is Terpene cyclase esdpB, found in Penicillium shearii (Eupenicillium shearii).